Consider the following 149-residue polypeptide: Cytochrome c-type biogenesis protein CcmE (149 aa).

At 1–7 (MKKRHQR) the chain is on the cytoplasmic side. A helical; Signal-anchor for type II membrane protein transmembrane segment spans residues 8-28 (LFLVLGVVAGVSVATALVLNA). The Periplasmic portion of the chain corresponds to 29-149 (FRDNMTFFIT…EHSVDEVGDY (121 aa)). 2 residues coordinate heme: H123 and Y127.

It belongs to the CcmE/CycJ family.

Its subcellular location is the cell inner membrane. Heme chaperone required for the biogenesis of c-type cytochromes. Transiently binds heme delivered by CcmC and transfers the heme to apo-cytochromes in a process facilitated by CcmF and CcmH. This chain is Cytochrome c-type biogenesis protein CcmE, found in Halorhodospira halophila (strain DSM 244 / SL1) (Ectothiorhodospira halophila (strain DSM 244 / SL1)).